Reading from the N-terminus, the 423-residue chain is tRNA-dihydrouridine(16/17) synthase [NAD(P)(+)] (423 aa).

Thr-2 carries the N-acetylthreonine modification. Residues 35 to 37 and Gln-92 each bind FMN; that span reads PMV. The active-site Proton donor is Cys-121. FMN-binding positions include Lys-160, His-188, 223–225, and 247–248; these read NGN and AE. The disordered stretch occupies residues 404–423; the sequence is KKRKADVPLESADKKKDVKA. A compositionally biased stretch (basic and acidic residues) spans 408–423; that stretch reads ADVPLESADKKKDVKA.

It belongs to the Dus family. Dus1 subfamily. As to quaternary structure, monomer. Requires FMN as cofactor.

It catalyses the reaction 5,6-dihydrouridine(16) in tRNA + NADP(+) = uridine(16) in tRNA + NADPH + H(+). The enzyme catalyses 5,6-dihydrouridine(16) in tRNA + NAD(+) = uridine(16) in tRNA + NADH + H(+). The catalysed reaction is 5,6-dihydrouridine(17) in tRNA + NAD(+) = uridine(17) in tRNA + NADH + H(+). It carries out the reaction 5,6-dihydrouridine(17) in tRNA + NADP(+) = uridine(17) in tRNA + NADPH + H(+). It catalyses the reaction a 5,6-dihydrouridine in mRNA + NAD(+) = a uridine in mRNA + NADH + H(+). The enzyme catalyses a 5,6-dihydrouridine in mRNA + NADP(+) = a uridine in mRNA + NADPH + H(+). Catalyzes the synthesis of dihydrouridine, a modified base found in the D-loop of most tRNAs. Specifically modifies U16 and U17 in cytoplasmic tRNAs. Also able to mediate dihydrouridylation of some mRNAs, thereby affecting their translation. This is tRNA-dihydrouridine(16/17) synthase [NAD(P)(+)] from Saccharomyces cerevisiae (strain ATCC 204508 / S288c) (Baker's yeast).